The following is a 148-amino-acid chain: MKSSIEPDFWKHKTLLEMTDAEWEALCDGCGKCCYRKFIEGHGKRKKLYYTRIACNLLDLETGRCTNYAKRFQLETDCTKLTKKNLPDFHWLPPTCAYRLLNENKPLFDWHPLISGDPHSVKKANILIKQGIHEKDVIDWFEFVVDGH.

Belongs to the UPF0260 family.

In Pasteurella multocida (strain Pm70), this protein is UPF0260 protein PM0539.